The following is a 130-amino-acid chain: Small ribosomal subunit protein uS9 (130 aa).

Positions 109-130 (RMKERRKYGLKKARKAPQFSKR) are disordered. Basic residues predominate over residues 111–130 (KERRKYGLKKARKAPQFSKR).

Belongs to the universal ribosomal protein uS9 family.

The chain is Small ribosomal subunit protein uS9 from Caldanaerobacter subterraneus subsp. tengcongensis (strain DSM 15242 / JCM 11007 / NBRC 100824 / MB4) (Thermoanaerobacter tengcongensis).